Consider the following 341-residue polypeptide: L-threonine 3-dehydrogenase (341 aa).

Zn(2+) is bound at residue Cys-38. Active-site charge relay system residues include Thr-40 and His-43. Zn(2+) contacts are provided by His-63, Glu-64, Cys-93, Cys-96, Cys-99, and Cys-107. Residues Ile-175, Asp-195, Arg-200, 262-264 (LGI), and 286-287 (IY) each bind NAD(+).

The protein belongs to the zinc-containing alcohol dehydrogenase family. In terms of assembly, homotetramer. Zn(2+) serves as cofactor.

Its subcellular location is the cytoplasm. It catalyses the reaction L-threonine + NAD(+) = (2S)-2-amino-3-oxobutanoate + NADH + H(+). It participates in amino-acid degradation; L-threonine degradation via oxydo-reductase pathway; glycine from L-threonine: step 1/2. Catalyzes the NAD(+)-dependent oxidation of L-threonine to 2-amino-3-ketobutyrate. The chain is L-threonine 3-dehydrogenase from Shewanella halifaxensis (strain HAW-EB4).